The sequence spans 377 residues: Chorismate synthase (377 aa).

Arg47 contacts NADP(+). Residues 124–126 (RSS), 252–253 (NS), Gly296, 311–315 (KPTPS), and Arg338 contribute to the FMN site.

It belongs to the chorismate synthase family. FMNH2 serves as cofactor.

The enzyme catalyses 5-O-(1-carboxyvinyl)-3-phosphoshikimate = chorismate + phosphate. It participates in metabolic intermediate biosynthesis; chorismate biosynthesis; chorismate from D-erythrose 4-phosphate and phosphoenolpyruvate: step 7/7. Its function is as follows. Catalyzes the anti-1,4-elimination of the C-3 phosphate and the C-6 proR hydrogen from 5-enolpyruvylshikimate-3-phosphate (EPSP) to yield chorismate, which is the branch point compound that serves as the starting substrate for the three terminal pathways of aromatic amino acid biosynthesis. This reaction introduces a second double bond into the aromatic ring system. The protein is Chorismate synthase of Methanococcus vannielii (strain ATCC 35089 / DSM 1224 / JCM 13029 / OCM 148 / SB).